A 78-amino-acid chain; its full sequence is Sec-independent protein translocase protein TatA (78 aa).

The helical transmembrane segment at 1 to 21 threads the bilayer; it reads MGSLSIWHWLIVLLIVALVFG. Basic and acidic residues-rich tracts occupy residues 39–57 and 65–78; these read FKEGMKDGETPEGQQRDQL and VDAKEKAPHSGDSR. The interval 39-78 is disordered; it reads FKEGMKDGETPEGQQRDQLSRTNTVDVDAKEKAPHSGDSR.

The protein belongs to the TatA/E family. As to quaternary structure, the Tat system comprises two distinct complexes: a TatABC complex, containing multiple copies of TatA, TatB and TatC subunits, and a separate TatA complex, containing only TatA subunits. Substrates initially bind to the TatABC complex, which probably triggers association of the separate TatA complex to form the active translocon.

The protein localises to the cell inner membrane. In terms of biological role, part of the twin-arginine translocation (Tat) system that transports large folded proteins containing a characteristic twin-arginine motif in their signal peptide across membranes. TatA could form the protein-conducting channel of the Tat system. This Paraburkholderia phymatum (strain DSM 17167 / CIP 108236 / LMG 21445 / STM815) (Burkholderia phymatum) protein is Sec-independent protein translocase protein TatA.